The following is a 48-amino-acid chain: Large ribosomal subunit protein eL40 (48 aa).

It belongs to the eukaryotic ribosomal protein eL40 family.

The polypeptide is Large ribosomal subunit protein eL40 (Methanoregula boonei (strain DSM 21154 / JCM 14090 / 6A8)).